Consider the following 421-residue polypeptide: MQPLHTLLALLPLCRSTTALLAFPGAEGFGANAVGGRGGDVYVVTNLEDSGEGSLRDAVSETDRIVVFAVGGVINIEDRLVVSKRVTILGQTAPGDGITVYGNGWSFSNADDAIVRYIRVRMGRGGDSGKDGITIAEGSNMIFDHVSVSWGRDETFSISGTAENITVQDSIIAQGLETHSCGGLMQTDGGVSLFRNLYIDNKTRNPKVKGVNEFTNNVVYNWGGGGGYIAGDSSGQSFGNYFISGPSTSVTAFTRGNENFHGYVENNYYDPDQDGTLNGNELGVSSSNYGGMDIVDTKYDYPAAQYIMTPDEAVSYVTENVGASLVRDGVDSNLIDQVLSYGTDGALISDEDDFGGVGDLDGGETPTDTDGDGIPDDVETQLGTDPNIADSTEIDSSTGYSWLEVWANSLVPEGYASTRKC.

Positions 1–19 (MQPLHTLLALLPLCRSTTA) are cleaved as a signal peptide. N-linked (GlcNAc...) asparagine glycans are attached at residues asparagine 164 and asparagine 201. Arginine 204 is an active-site residue. Positions 257–292 (NENFHGYVENNYYDPDQDGTLNGNELGVSSSNYGGM) constitute an EF-hand domain. Ca(2+) contacts are provided by aspartate 270, aspartate 272, aspartate 274, threonine 276, and glutamate 281. The interval 353–376 (DFGGVGDLDGGETPTDTDGDGIPD) is disordered. A compositionally biased stretch (acidic residues) spans 367-376 (TDTDGDGIPD).

This sequence belongs to the polysaccharide lyase 1 family. It depends on Ca(2+) as a cofactor.

Its subcellular location is the secreted. The enzyme catalyses Eliminative cleavage of (1-&gt;4)-alpha-D-galacturonan to give oligosaccharides with 4-deoxy-alpha-D-galact-4-enuronosyl groups at their non-reducing ends.. Functionally, pectinolytic enzyme consist of four classes of enzymes: pectin lyase, polygalacturonase, pectin methylesterase and rhamnogalacturonase. Among pectinolytic enzymes, pectin lyase is the most important in depolymerization of pectin, since it cleaves internal glycosidic bonds of highly methylated pectins. Favors pectate, the anion, over pectin, the methyl ester. In Emericella nidulans (strain FGSC A4 / ATCC 38163 / CBS 112.46 / NRRL 194 / M139) (Aspergillus nidulans), this protein is Probable pectate lyase C (plyC).